The following is a 107-amino-acid chain: uncharacterized protein (107 aa).

Residues 34 to 107 (FASKDKKDEK…SDNQKKDMSY (74 aa)) are a coiled coil.

This is an uncharacterized protein from Dictyostelium discoideum (Social amoeba).